The primary structure comprises 513 residues: ATP synthase subunit alpha (513 aa).

169 to 176 provides a ligand contact to ATP; that stretch reads GDRQTGKT.

It belongs to the ATPase alpha/beta chains family. In terms of assembly, F-type ATPases have 2 components, CF(1) - the catalytic core - and CF(0) - the membrane proton channel. CF(1) has five subunits: alpha(3), beta(3), gamma(1), delta(1), epsilon(1). CF(0) has three main subunits: a(1), b(2) and c(9-12). The alpha and beta chains form an alternating ring which encloses part of the gamma chain. CF(1) is attached to CF(0) by a central stalk formed by the gamma and epsilon chains, while a peripheral stalk is formed by the delta and b chains.

The protein localises to the cell inner membrane. The enzyme catalyses ATP + H2O + 4 H(+)(in) = ADP + phosphate + 5 H(+)(out). Produces ATP from ADP in the presence of a proton gradient across the membrane. The alpha chain is a regulatory subunit. The chain is ATP synthase subunit alpha from Vesicomyosocius okutanii subsp. Calyptogena okutanii (strain HA).